We begin with the raw amino-acid sequence, 960 residues long: Dynamin-like GTPase OPA1, mitochondrial (960 aa).

A mitochondrion-targeting transit peptide spans 1–87 (MWRAGRAAVA…IKYGYQPRRN (87 aa)). Topologically, residues 88–96 (FWPARLAAR) are mitochondrial matrix. A helical transmembrane segment spans residues 97-113 (LLKLRYIILGSAVGGGY). The Mitochondrial intermembrane segment spans residues 114–770 (TAKKTFDEWK…NAIENMIGPD (657 aa)). Residues 210–254 (SDKEKIDQLQEELLHTQLKYQRILERLEKENKELRKLVLQKDDKG) are a coiled coil. The LQQQIQ motif motif lies at 217–222 (QLQEEL). Lys-228 carries the N6-acetyllysine modification. The region spanning 285–561 (QDHLPRVVVV…FWKMVRESVE (277 aa)) is the Dynamin-type G domain. Residues 295-302 (GDQSAGKT) form a G1 motif region. Residues Ser-298, Gly-300, Lys-301, Thr-302, Ser-303, and Gly-317 each contribute to the GTP site. Thr-302 is a binding site for Mg(2+). Residues 321–324 (MMTR) are G2 motif. Mg(2+) contacts are provided by Thr-323 and Asp-398. The tract at residues 398 to 401 (DLPG) is G3 motif. The G4 motif stretch occupies residues 467-470 (TKVD). Residues Lys-468, Asp-470, and Thr-503 each contribute to the GTP site. The interval 501–504 (VVTG) is G5 motif. Stalk region regions lie at residues 589–836 (DRNE…IKDT) and 874–928 (CNDV…VKLL). The tract at residues 736-856 (SDKQQWDAAI…KTALNHCNLC (121 aa)) is paddle region. Residues 771–781 (WKKRWMYWKNR) lie within the membrane without spanning it. Over 782–960 (TQEQCVHNET…AFIEALHQEK (179 aa)) the chain is Mitochondrial intermembrane. Cys-856 and Cys-874 are disulfide-bonded. The stretch at 895–960 (RQQLTNTEVR…AFIEALHQEK (66 aa)) forms a coiled coil.

Belongs to the TRAFAC class dynamin-like GTPase superfamily. Dynamin/Fzo/YdjA family. As to quaternary structure, oligomeric complex consisting of membrane-bound and soluble forms of OPA1. Interacts with RCC1L; RCC1L acts as a guanine nucleotide exchange factor (GEF) for OPA1 by exchanging bound GDP for free GTP. Interacts with CHCHD3 and IMMT; these interactions occur preferentially with soluble OPA1 forms. Interacts with PRELID1. In terms of processing, cleaved by OMA1 or YME1L downstream of the transmembrane region in response to different signals to generate soluble forms. Cleaved by OMA1 at position S1 following stress conditions, generating the short soluble form (Dynamin-like GTPase OPA1, short form; S-OPA1). AFG3L2 is involved in the regulation of OMA1-dependent processing of OPA1. PARL-dependent proteolytic processing releases an antiapoptotic soluble form not required for mitochondrial fusion. Cleavage at position S2 by YME1L is required to mediate oxidative phosphorylation (OXPHOS)-induced mitochondrial fusion. Cleavage occurs in the sequence motif Leu-Gln-Gln-Gln-Ile-Gln (LQQQIQ). Post-translationally, cleavage at position S3 by YME1L is required for membrane tubulation. As to expression, detected in brain (at protein level). Detected in brain, brain stem, heart, kidney, liver and skeletal muscle.

The protein localises to the mitochondrion inner membrane. It is found in the mitochondrion intermembrane space. It catalyses the reaction GTP + H2O = GDP + phosphate + H(+). With respect to regulation, activated by guanine nucleotide exchange factor RCC1L. Its function is as follows. Dynamin-related GTPase that is essential for normal mitochondrial morphology by mediating fusion of the mitochondrial inner membranes, regulating cristae morphology and maintaining respiratory chain function. Exists in two forms: the transmembrane, long form (Dynamin-like GTPase OPA1, long form; L-OPA1), which is tethered to the inner mitochondrial membrane, and the short soluble form (Dynamin-like GTPase OPA1, short form; S-OPA1), which results from proteolytic cleavage and localizes in the intermembrane space. Both forms (L-OPA1 and S-OPA1) cooperate to catalyze the fusion of the mitochondrial inner membrane. The equilibrium between L-OPA1 and S-OPA1 is essential: excess levels of S-OPA1, produced by cleavage by OMA1 following loss of mitochondrial membrane potential, lead to an impaired equilibrium between L-OPA1 and S-OPA1, inhibiting mitochondrial fusion. The balance between L-OPA1 and S-OPA1 also influences cristae shape and morphology. Involved in remodeling cristae and the release of cytochrome c during apoptosis. Proteolytic processing by PARL in response to intrinsic apoptotic signals may lead to disassembly of OPA1 oligomers and release of the caspase activator cytochrome C (CYCS) into the mitochondrial intermembrane space. Acts as a regulator of T-helper Th17 cells, which are characterized by cells with fused mitochondria with tight cristae, by mediating mitochondrial membrane remodeling: OPA1 is required for interleukin-17 (IL-17) production. Its role in mitochondrial morphology is required for mitochondrial genome maintenance. Functionally, constitutes the transmembrane long form (L-OPA1) that plays a central role in mitochondrial inner membrane fusion and cristae morphology. L-OPA1 and the soluble short form (S-OPA1) form higher-order helical assemblies that coordinate the fusion of mitochondrial inner membranes. Inner membrane-anchored L-OPA1 molecules initiate membrane remodeling by recruiting soluble S-OPA1 to rapidly polymerize into a flexible cylindrical scaffold encaging the mitochondrial inner membrane. Once at the membrane surface, the formation of S-OPA1 helices induce bilayer curvature. OPA1 dimerization through the paddle region, which inserts into cardiolipin-containing membrane, promotes GTP hydrolysis and the helical assembly of a flexible OPA1 lattice on the membrane, which drives membrane curvature and mitochondrial fusion. Plays a role in the maintenance and remodeling of mitochondrial cristae, some invaginations of the mitochondrial inner membrane that provide an increase in the surface area. Probably acts by forming helical filaments at the inside of inner membrane tubes with the shape and dimensions of crista junctions. The equilibrium between L-OPA1 and S-OPA1 influences cristae shape and morphology: increased L-OPA1 levels promote cristae stacking and elongated mitochondria, while increased S-OPA1 levels correlated with irregular cristae packing and round mitochondria shape. Constitutes the soluble short form (S-OPA1) generated by cleavage by OMA1, which plays a central role in mitochondrial inner membrane fusion and cristae morphology. The transmembrane long form (L-OPA1) and the S-OPA1 form higher-order helical assemblies that coordinate the fusion of mitochondrial inner membranes. Inner membrane-anchored L-OPA1 molecules initiate membrane remodeling by recruiting soluble S-OPA1 to rapidly polymerize into a flexible cylindrical scaffold encaging the mitochondrial inner membrane. Once at the membrane surface, the formation of S-OPA1 helices induce bilayer curvature. OPA1 dimerization through the paddle region, which inserts into cardiolipin-containing membrane, promotes GTP hydrolysis and the helical assembly of a flexible OPA1 lattice on the membrane, which drives membrane curvature and mitochondrial fusion. Excess levels of S-OPA1 produced by cleavage by OMA1 following stress conditions that induce loss of mitochondrial membrane potential, lead to an impaired equilibrium between L-OPA1 and S-OPA1, thereby inhibiting mitochondrial fusion. Involved in mitochondrial safeguard in response to transient mitochondrial membrane depolarization by mediating flickering: cleavage by OMA1 leads to excess production of S-OPA1, preventing mitochondrial hyperfusion. Plays a role in the maintenance and remodeling of mitochondrial cristae, some invaginations of the mitochondrial inner membrane that provide an increase in the surface area. Probably acts by forming helical filaments at the inside of inner membrane tubes with the shape and dimensions of crista junctions. The equilibrium between L-OPA1 and S-OPA1 influences cristae shape and morphology: increased L-OPA1 levels promote cristae stacking and elongated mitochondria, while increased S-OPA1 levels correlated with irregular cristae packing and round mitochondria shape. In terms of biological role, isoforms that contain the alternative exon 4b are required for mitochondrial genome maintenance, possibly by anchoring the mitochondrial nucleoids to the inner mitochondrial membrane. The chain is Dynamin-like GTPase OPA1, mitochondrial from Mus musculus (Mouse).